Here is a 103-residue protein sequence, read N- to C-terminus: Small ribosomal subunit protein eS25 (103 aa).

The segment at 1–23 is disordered; the sequence is MGGEDMAKKKAPSAKEGEKQQGF.

It belongs to the eukaryotic ribosomal protein eS25 family.

This Aeropyrum pernix (strain ATCC 700893 / DSM 11879 / JCM 9820 / NBRC 100138 / K1) protein is Small ribosomal subunit protein eS25 (rps25e).